We begin with the raw amino-acid sequence, 417 residues long: Secernin-3 (417 aa).

A propeptide spanning residues 1–5 (MYPRS) is cleaved from the precursor. Residue Cys-6 is part of the active site. Cys-6 carries the glyoxylic acid (Cys); alternate modification. A Pyruvic acid (Cys); alternate modification is found at Cys-6.

The protein belongs to the peptidase C69 family. Secernin subfamily.

In terms of biological role, plays a role in thermal nociception. The polypeptide is Secernin-3 (scrn3) (Danio rerio (Zebrafish)).